A 351-amino-acid chain; its full sequence is Beta-hexosaminidase (351 aa).

Residues aspartate 62, arginine 70, arginine 134, and 164–165 (KH) contribute to the substrate site. The active-site Proton donor/acceptor is histidine 177. The active-site Nucleophile is the aspartate 249.

This sequence belongs to the glycosyl hydrolase 3 family. NagZ subfamily.

It is found in the cytoplasm. The catalysed reaction is Hydrolysis of terminal non-reducing N-acetyl-D-hexosamine residues in N-acetyl-beta-D-hexosaminides.. It functions in the pathway cell wall biogenesis; peptidoglycan recycling. Plays a role in peptidoglycan recycling by cleaving the terminal beta-1,4-linked N-acetylglucosamine (GlcNAc) from peptide-linked peptidoglycan fragments, giving rise to free GlcNAc, anhydro-N-acetylmuramic acid and anhydro-N-acetylmuramic acid-linked peptides. The protein is Beta-hexosaminidase of Histophilus somni (strain 129Pt) (Haemophilus somnus).